The sequence spans 356 residues: 1-deoxy-D-xylulose 5-phosphate reductoisomerase (356 aa).

7 residues coordinate NADPH: Thr-7, Gly-8, Ser-9, Ile-10, Gly-31, Asn-33, and Asn-111. Lys-112 is a binding site for 1-deoxy-D-xylulose 5-phosphate. Glu-113 is a binding site for NADPH. Asp-131 provides a ligand contact to Mn(2+). 1-deoxy-D-xylulose 5-phosphate is bound by residues Ser-132, Glu-133, Ser-155, and His-178. Glu-133 is a Mn(2+) binding site. Gly-184 contributes to the NADPH binding site. Ser-191, Asn-196, Lys-197, and Glu-200 together coordinate 1-deoxy-D-xylulose 5-phosphate. Glu-200 contacts Mn(2+).

It belongs to the DXR family. Requires Mg(2+) as cofactor. Mn(2+) is required as a cofactor.

The enzyme catalyses 2-C-methyl-D-erythritol 4-phosphate + NADP(+) = 1-deoxy-D-xylulose 5-phosphate + NADPH + H(+). The protein operates within isoprenoid biosynthesis; isopentenyl diphosphate biosynthesis via DXP pathway; isopentenyl diphosphate from 1-deoxy-D-xylulose 5-phosphate: step 1/6. In terms of biological role, catalyzes the NADPH-dependent rearrangement and reduction of 1-deoxy-D-xylulose-5-phosphate (DXP) to 2-C-methyl-D-erythritol 4-phosphate (MEP). This is 1-deoxy-D-xylulose 5-phosphate reductoisomerase from Campylobacter jejuni subsp. jejuni serotype O:6 (strain 81116 / NCTC 11828).